We begin with the raw amino-acid sequence, 677 residues long: Pannexin-2 (677 aa).

At 11–47 (MATALLAGEKLRELILPGAQDDKAGALAALLLQLKLE) the chain is on the cytoplasmic side. Residues 48 to 70 (LPFDRVVTIGTVLVPILLVTLVF) form a helical membrane-spanning segment. Residues 71 to 123 (TKNFAEEPIYCYTPHNFTRDQALYARGYCWTELRDALPGVDASLWPSLFEHKF) lie on the Extracellular side of the membrane. N-linked (GlcNAc...) asparagine glycosylation occurs at Asn-86. A helical membrane pass occupies residues 124 to 146 (LPYALLAFAAIMYVPALGWEFLA). Residues 147-226 (STRLTSELNF…RGRSNFLAKL (80 aa)) are Cytoplasmic-facing. Residues 227 to 249 (YLARHVLILLLSAVPISYLCTYY) traverse the membrane as a helical segment. Topologically, residues 250 to 292 (ATQKQNEFTCALGASPDGAAGAGPAVRVSCKLPSVQLQRIIAG) are extracellular. A helical membrane pass occupies residues 293–315 (VDIVLLCVMNLIILVNLIHLFIF). The Cytoplasmic segment spans residues 316–643 (RKSNFIFDKL…AREEEDGGPR (328 aa)). Disordered stretches follow at residues 393–423 (ATPT…PPVV) and 454–510 (NSKA…KKHA). The segment covering 492 to 504 (GPGPAPAPAPPPA) has biased composition (pro residues). Phosphoserine is present on Ser-593.

The protein belongs to the pannexin family. In terms of assembly, homoheptameric. In terms of processing, S-palmitoylated in neural stem and progenitor cells. Post-translationally, cleaved by CASP3 and CASP7 during apoptosis. Cleavage has no effect on it function.

It localises to the cell membrane. Its subcellular location is the golgi apparatus membrane. It is found in the endoplasmic reticulum membrane. It catalyses the reaction ATP(in) = ATP(out). It carries out the reaction chloride(in) = chloride(out). The enzyme catalyses iodide(out) = iodide(in). The catalysed reaction is Na(+)(in) = Na(+)(out). It catalyses the reaction D-gluconate(in) = D-gluconate(out). Functionally, ion channel with a slight anion preference. Also able to release ATP. Plays a role in regulating neurogenesis and apoptosis in keratinocytes. This Homo sapiens (Human) protein is Pannexin-2.